The following is a 117-amino-acid chain: Hainantoxin-XV (117 aa).

An N-terminal signal peptide occupies residues 1–20; the sequence is MKLCAVIIASLLVCVAVASS. The interval 20–55 is disordered; it reads SSDNQKEFAQEKEMTREETQSLGEHEKDDEVTGSEE. Residues 21–56 constitute a propeptide that is removed on maturation; the sequence is SDNQKEFAQEKEMTREETQSLGEHEKDDEVTGSEER. Residues 23–55 are compositionally biased toward basic and acidic residues; sequence NQKEFAQEKEMTREETQSLGEHEKDDEVTGSEE. Disulfide bonds link Cys-58–Cys-72, Cys-65–Cys-78, Cys-69–Cys-115, and Cys-71–Cys-91.

The protein belongs to the neurotoxin 03 (Tx2) family. 02 subfamily. HNTX-XV sub-subfamily. Expressed by the venom gland.

It localises to the secreted. Putative ion channel inhibitor. In Cyriopagopus hainanus (Chinese bird spider), this protein is Hainantoxin-XV.